A 250-amino-acid polypeptide reads, in one-letter code: tRNA pseudouridine synthase A (250 aa).

D53 functions as the Nucleophile in the catalytic mechanism. A substrate-binding site is contributed by Y111.

It belongs to the tRNA pseudouridine synthase TruA family. As to quaternary structure, homodimer.

The catalysed reaction is uridine(38/39/40) in tRNA = pseudouridine(38/39/40) in tRNA. Functionally, formation of pseudouridine at positions 38, 39 and 40 in the anticodon stem and loop of transfer RNAs. This Streptococcus uberis (strain ATCC BAA-854 / 0140J) protein is tRNA pseudouridine synthase A.